Here is a 396-residue protein sequence, read N- to C-terminus: Tryptophan synthase beta chain (396 aa).

N6-(pyridoxal phosphate)lysine is present on lysine 86.

Belongs to the TrpB family. As to quaternary structure, tetramer of two alpha and two beta chains. The cofactor is pyridoxal 5'-phosphate.

It catalyses the reaction (1S,2R)-1-C-(indol-3-yl)glycerol 3-phosphate + L-serine = D-glyceraldehyde 3-phosphate + L-tryptophan + H2O. Its pathway is amino-acid biosynthesis; L-tryptophan biosynthesis; L-tryptophan from chorismate: step 5/5. Functionally, the beta subunit is responsible for the synthesis of L-tryptophan from indole and L-serine. The polypeptide is Tryptophan synthase beta chain (Yersinia enterocolitica serotype O:8 / biotype 1B (strain NCTC 13174 / 8081)).